The following is a 243-amino-acid chain: Nuclear ubiquitous casein and cyclin-dependent kinase substrate 1 (243 aa).

The interval Met1–Asp243 is disordered. Phosphotyrosine is present on Tyr13. 2 positions are modified to phosphoserine: Ser14 and Ser19. The residue at position 26 (Tyr26) is a Phosphotyrosine. The span at Lys35–Gly51 shows a compositional bias: basic residues. Phosphoserine is present on residues Ser54, Ser58, Ser61, Ser73, Ser75, and Ser79. A compositionally biased stretch (basic and acidic residues) spans Lys64–Glu77. A compositionally biased stretch (low complexity) spans Gln91–Ala100. Residues Val111 to Pro124 show a composition bias toward acidic residues. Residues Ser113, Ser130, Ser132, and Ser144 each carry the phosphoserine modification. The span at Ser132–Asp145 shows a compositional bias: acidic residues. Residues Ser149–Leu174 are compositionally biased toward basic residues. Thr179 is subject to Phosphothreonine. Ser181 is subject to Phosphoserine. Over residues Ala197 to Lys206 the composition is skewed to basic and acidic residues. Phosphothreonine is present on Thr202. Phosphoserine is present on residues Ser204, Ser214, Ser223, Ser229, Ser234, and Ser240. Residues Glu232 to Asp243 are compositionally biased toward acidic residues.

Does not interact with RAD51. Post-translationally, phosphorylated in an ATM-dependent manner in response to DNA damage. Phosphorylated by CDK1 and casein kinase.

The protein resides in the nucleus. Its subcellular location is the chromosome. Chromatin-associated protein involved in DNA repair by promoting homologous recombination (HR). Binds double-stranded DNA (dsDNA) and secondary DNA structures, such as D-loop structures, but with less affinity than RAD51AP1. This chain is Nuclear ubiquitous casein and cyclin-dependent kinase substrate 1 (NUCKS1), found in Bos taurus (Bovine).